The following is a 642-amino-acid chain: Threonine--tRNA ligase (642 aa).

Residues M1–T61 enclose the TGS domain. A catalytic region spans residues D243 to P534. K286 is modified (N6-acetyllysine). Zn(2+)-binding residues include C334, H385, and H511.

Belongs to the class-II aminoacyl-tRNA synthetase family. Homodimer. Requires Zn(2+) as cofactor.

It localises to the cytoplasm. The enzyme catalyses tRNA(Thr) + L-threonine + ATP = L-threonyl-tRNA(Thr) + AMP + diphosphate + H(+). Catalyzes the attachment of threonine to tRNA(Thr) in a two-step reaction: L-threonine is first activated by ATP to form Thr-AMP and then transferred to the acceptor end of tRNA(Thr). Also edits incorrectly charged L-seryl-tRNA(Thr). The chain is Threonine--tRNA ligase from Escherichia fergusonii (strain ATCC 35469 / DSM 13698 / CCUG 18766 / IAM 14443 / JCM 21226 / LMG 7866 / NBRC 102419 / NCTC 12128 / CDC 0568-73).